A 305-amino-acid chain; its full sequence is Acyl transferase (305 aa).

Catalysis depends on charge relay system residues Ser-114, Asp-211, and His-241.

Belongs to the LuxD family.

It functions in the pathway lipid metabolism; fatty acid reduction for biolumincescence. Acyl transferase is part of the fatty acid reductase system required for aldehyde biosynthesis; it produces fatty acids for the luminescent reaction. The polypeptide is Acyl transferase (luxD) (Vibrio harveyi (Beneckea harveyi)).